Consider the following 337-residue polypeptide: MDQYITLVELYIYDCNLFKSKNLKSFYKVHRVPEGDIVPKRRGGQLAGVTKSWVETNLVHFPLWLSEWDETRWGVLNHYPLESWLEKNVSSKVPVNPVMWNFDSECLVYFFHNGRRTPFLTPKGVVKLQVFYNLMSGKEVEWFYEISNGFLKPHLHQLSNVRELVRLKHAPVVVGAGGPRLVTEGVYSLRDDDFVVDCSQIAAVKRAIERGESHQSLRKYQCPLFVALTDKFQDTVKLVEKKFEVQLNELKAETTIQVLREQLRQEKKLKEQVLSLTQSFIPTIGGRGEEFGKPDETPSSASVGDDNFPSSTNHTFEARRRPSSLSSGGALKPSKIL.

The stretch at 248–276 (NELKAETTIQVLREQLRQEKKLKEQVLSL) forms a coiled coil. Residues 285–337 (GGRGEEFGKPDETPSSASVGDDNFPSSTNHTFEARRRPSSLSSGGALKPSKIL) are disordered. Residues 287–296 (RGEEFGKPDE) are compositionally biased toward basic and acidic residues. Positions 297 to 315 (TPSSASVGDDNFPSSTNHT) are enriched in polar residues.

This is an uncharacterized protein from Invertebrate iridescent virus 3 (IIV-3).